The sequence spans 161 residues: Protein-export protein SecB (161 aa).

Belongs to the SecB family. As to quaternary structure, homotetramer, a dimer of dimers. One homotetramer interacts with 1 SecA dimer.

The protein resides in the cytoplasm. Functionally, one of the proteins required for the normal export of preproteins out of the cell cytoplasm. It is a molecular chaperone that binds to a subset of precursor proteins, maintaining them in a translocation-competent state. It also specifically binds to its receptor SecA. The chain is Protein-export protein SecB from Ectopseudomonas mendocina (strain ymp) (Pseudomonas mendocina).